Reading from the N-terminus, the 263-residue chain is 3-methyl-2-oxobutanoate hydroxymethyltransferase (263 aa).

Residues Asp-45 and Asp-84 each contribute to the Mg(2+) site. Residues 45-46, Asp-84, and Lys-112 each bind 3-methyl-2-oxobutanoate; that span reads DS. Mg(2+) is bound at residue Glu-114. Glu-180 functions as the Proton acceptor in the catalytic mechanism.

It belongs to the PanB family. As to quaternary structure, homodecamer; pentamer of dimers. Mg(2+) serves as cofactor.

It localises to the cytoplasm. The catalysed reaction is 3-methyl-2-oxobutanoate + (6R)-5,10-methylene-5,6,7,8-tetrahydrofolate + H2O = 2-dehydropantoate + (6S)-5,6,7,8-tetrahydrofolate. It participates in cofactor biosynthesis; (R)-pantothenate biosynthesis; (R)-pantoate from 3-methyl-2-oxobutanoate: step 1/2. Catalyzes the reversible reaction in which hydroxymethyl group from 5,10-methylenetetrahydrofolate is transferred onto alpha-ketoisovalerate to form ketopantoate. This is 3-methyl-2-oxobutanoate hydroxymethyltransferase from Citrobacter koseri (strain ATCC BAA-895 / CDC 4225-83 / SGSC4696).